The following is a 398-amino-acid chain: Phosphoglycerate kinase (398 aa).

Substrate is bound by residues 23-25 (DLN), Arg38, 61-64 (HFGR), Arg119, and Arg152. ATP-binding positions include Lys202, Glu324, and 354 to 357 (GGDT).

This sequence belongs to the phosphoglycerate kinase family. In terms of assembly, monomer.

Its subcellular location is the cytoplasm. The enzyme catalyses (2R)-3-phosphoglycerate + ATP = (2R)-3-phospho-glyceroyl phosphate + ADP. Its pathway is carbohydrate degradation; glycolysis; pyruvate from D-glyceraldehyde 3-phosphate: step 2/5. The protein is Phosphoglycerate kinase of Bradyrhizobium diazoefficiens (strain JCM 10833 / BCRC 13528 / IAM 13628 / NBRC 14792 / USDA 110).